The sequence spans 261 residues: Glutamate racemase (261 aa).

Residues 12-13 and 44-45 each bind substrate; these read DS and YG. Catalysis depends on cysteine 76, which acts as the Proton donor/acceptor. 77–78 serves as a coordination point for substrate; the sequence is NT. Residue cysteine 180 is the Proton donor/acceptor of the active site. Residue 181–182 coordinates substrate; it reads TH.

This sequence belongs to the aspartate/glutamate racemases family.

It carries out the reaction L-glutamate = D-glutamate. It participates in cell wall biogenesis; peptidoglycan biosynthesis. Functionally, provides the (R)-glutamate required for cell wall biosynthesis. The protein is Glutamate racemase of Borreliella burgdorferi (strain ATCC 35210 / DSM 4680 / CIP 102532 / B31) (Borrelia burgdorferi).